A 452-amino-acid polypeptide reads, in one-letter code: Bifunctional protein GlmU (452 aa).

Positions 1-225 (MDVVILAAGL…ENELIGINTR (225 aa)) are pyrophosphorylase. Residues 6–9 (LAAG), lysine 20, glutamine 71, and 76–77 (GT) contribute to the UDP-N-acetyl-alpha-D-glucosamine site. Position 99 (aspartate 99) interacts with Mg(2+). Residues glycine 136, glutamate 151, asparagine 166, and asparagine 223 each contribute to the UDP-N-acetyl-alpha-D-glucosamine site. A Mg(2+)-binding site is contributed by asparagine 223. Positions 226-246 (AELSLAMRYLRDRIVKGWMEK) are linker. The tract at residues 247-452 (GITFYDPALV…LGWAKKKRKQ (206 aa)) is N-acetyltransferase. Residues arginine 329 and lysine 347 each contribute to the UDP-N-acetyl-alpha-D-glucosamine site. The active-site Proton acceptor is histidine 359. Residues tyrosine 362 and asparagine 373 each contribute to the UDP-N-acetyl-alpha-D-glucosamine site. Acetyl-CoA is bound by residues alanine 376, 382 to 383 (NY), serine 401, alanine 419, and arginine 436.

The protein in the N-terminal section; belongs to the N-acetylglucosamine-1-phosphate uridyltransferase family. In the C-terminal section; belongs to the transferase hexapeptide repeat family. Homotrimer. Requires Mg(2+) as cofactor.

The protein resides in the cytoplasm. The catalysed reaction is alpha-D-glucosamine 1-phosphate + acetyl-CoA = N-acetyl-alpha-D-glucosamine 1-phosphate + CoA + H(+). It carries out the reaction N-acetyl-alpha-D-glucosamine 1-phosphate + UTP + H(+) = UDP-N-acetyl-alpha-D-glucosamine + diphosphate. Its pathway is nucleotide-sugar biosynthesis; UDP-N-acetyl-alpha-D-glucosamine biosynthesis; N-acetyl-alpha-D-glucosamine 1-phosphate from alpha-D-glucosamine 6-phosphate (route II): step 2/2. The protein operates within nucleotide-sugar biosynthesis; UDP-N-acetyl-alpha-D-glucosamine biosynthesis; UDP-N-acetyl-alpha-D-glucosamine from N-acetyl-alpha-D-glucosamine 1-phosphate: step 1/1. It functions in the pathway bacterial outer membrane biogenesis; LPS lipid A biosynthesis. In terms of biological role, catalyzes the last two sequential reactions in the de novo biosynthetic pathway for UDP-N-acetylglucosamine (UDP-GlcNAc). The C-terminal domain catalyzes the transfer of acetyl group from acetyl coenzyme A to glucosamine-1-phosphate (GlcN-1-P) to produce N-acetylglucosamine-1-phosphate (GlcNAc-1-P), which is converted into UDP-GlcNAc by the transfer of uridine 5-monophosphate (from uridine 5-triphosphate), a reaction catalyzed by the N-terminal domain. The polypeptide is Bifunctional protein GlmU (Thermodesulfovibrio yellowstonii (strain ATCC 51303 / DSM 11347 / YP87)).